The sequence spans 457 residues: Bifunctional protein GlmU (457 aa).

A pyrophosphorylase region spans residues 1 to 230 (MPLSLPLHIV…PREVEGVNDL (230 aa)). UDP-N-acetyl-alpha-D-glucosamine is bound by residues 12–15 (LAAG), lysine 26, glutamine 78, 83–84 (GT), 105–107 (YGD), glycine 140, glutamate 155, asparagine 170, and asparagine 228. A Mg(2+)-binding site is contributed by aspartate 107. Asparagine 228 is a binding site for Mg(2+). The interval 231–251 (WQLTQLERTWQIRAARALCLQ) is linker. The tract at residues 252 to 457 (GARVADPARL…DGWQRPKKKT (206 aa)) is N-acetyltransferase. UDP-N-acetyl-alpha-D-glucosamine is bound by residues arginine 334 and lysine 352. Catalysis depends on histidine 364, which acts as the Proton acceptor. UDP-N-acetyl-alpha-D-glucosamine is bound by residues tyrosine 367 and asparagine 378. Acetyl-CoA-binding positions include alanine 381, 387 to 388 (NY), serine 406, alanine 424, and arginine 441.

In the N-terminal section; belongs to the N-acetylglucosamine-1-phosphate uridyltransferase family. It in the C-terminal section; belongs to the transferase hexapeptide repeat family. As to quaternary structure, homotrimer. Mg(2+) is required as a cofactor.

The protein localises to the cytoplasm. The enzyme catalyses alpha-D-glucosamine 1-phosphate + acetyl-CoA = N-acetyl-alpha-D-glucosamine 1-phosphate + CoA + H(+). It catalyses the reaction N-acetyl-alpha-D-glucosamine 1-phosphate + UTP + H(+) = UDP-N-acetyl-alpha-D-glucosamine + diphosphate. Its pathway is nucleotide-sugar biosynthesis; UDP-N-acetyl-alpha-D-glucosamine biosynthesis; N-acetyl-alpha-D-glucosamine 1-phosphate from alpha-D-glucosamine 6-phosphate (route II): step 2/2. It participates in nucleotide-sugar biosynthesis; UDP-N-acetyl-alpha-D-glucosamine biosynthesis; UDP-N-acetyl-alpha-D-glucosamine from N-acetyl-alpha-D-glucosamine 1-phosphate: step 1/1. It functions in the pathway bacterial outer membrane biogenesis; LPS lipid A biosynthesis. Its function is as follows. Catalyzes the last two sequential reactions in the de novo biosynthetic pathway for UDP-N-acetylglucosamine (UDP-GlcNAc). The C-terminal domain catalyzes the transfer of acetyl group from acetyl coenzyme A to glucosamine-1-phosphate (GlcN-1-P) to produce N-acetylglucosamine-1-phosphate (GlcNAc-1-P), which is converted into UDP-GlcNAc by the transfer of uridine 5-monophosphate (from uridine 5-triphosphate), a reaction catalyzed by the N-terminal domain. This Xylella fastidiosa (strain M12) protein is Bifunctional protein GlmU.